Reading from the N-terminus, the 139-residue chain is Non-structural protein 1 (139 aa).

The short motif at 136–139 (DLNP) is the DLNP; interaction with MAP1B element.

Belongs to the pneumovirus non-structural protein 1 family. Monomer. Homomultimer. Heteromultimer with NS2. Interacts with the matrix protein M. Interacts with host ELOC and CUL2; this interaction allows NS1 to form an active E3 ligase with ELOC and CUL2. Interacts with host IRF3; this interaction leads to the disrupted association of IRF3 with CREBBP and thus reduced binding of IRF3 to the IFN-beta promoter. Interacts with host MAVS; this interaction prevents MAVS binding to RIGI and inhibits signaling pathway leading to interferon production. Interacts with host MAP1B/microtubule-associated protein 1B. Interacts with host TRIM25 (via SPRY domain); this interaction suppresses RIGI ubiquitination and results in decreased interaction between RIGI and MAVS.

It is found in the host cytoplasm. The protein resides in the host mitochondrion. Its subcellular location is the host nucleus. Its function is as follows. Plays a major role in antagonizing the type I IFN-mediated antiviral response by degrading or inhibiting multiple cellular factors required for either IFN induction or response pathways. Acts cooperatively with NS2 to repress activation and nuclear translocation of host IFN-regulatory factor IRF3. Also disrupts the association of IRF3 with CREBBP. Interacts with host mitochondrial-associated membrane (MAM) MAVS and prevents the interaction with RIGI. Interacts with TRIM25 to suppress TRIM25-mediated RIGI ubiquitination and thereby RIGI-MAVS interaction. Together with NS2, participates in the proteasomal degradation of host STAT2, IRF3, IRF7, TBK1 and RIGI through a NS-degradasome involving CUL2 and Elongin-C. The degradasome requires an intact mitochondrial MAVS. Decreases the levels of host TRAF3 and IKBKE/IKK-epsilon. As functions other than disruptions of the type I IFN-mediated antiviral signaling pathways, induces host SOCS1 and SOCS3 expression. Suppresses premature apoptosis by an NF-kappa-B-dependent, interferon-independent mechanism and thus facilitates virus growth. Additionally, NS1 may serve some inhibitory role in viral transcription and RNA replication. Suppresses proliferation and activation of host CD103+ CD8+ cytotoxic T-lymphocytes and Th17 helper T-lymphocytes. The sequence is that of Non-structural protein 1 (1C) from Homo sapiens (Human).